A 444-amino-acid chain; its full sequence is Probable polygalacturonase At1g80170 (444 aa).

An N-terminal signal peptide occupies residues 1–28; sequence MSYSRGGTLVTLLLLLVVASSLALTANA. PbH1 repeat units follow at residues 208 to 234, 235 to 256, 258 to 278, 288 to 309, 317 to 338, and 351 to 378; these read CRRV…HISV, SRGI…SIVK, STQI…SIGS, VRDI…RIKT, VSKI…IIDQ, and TSAI…KISC. Catalysis depends on aspartate 249, which acts as the Proton donor. Histidine 272 is an active-site residue.

Belongs to the glycosyl hydrolase 28 family. In terms of tissue distribution, expressed in young, mature and dehiscing anthers. Found in stems, but not in roots or in abscission zone of floral organs.

The protein localises to the secreted. Its subcellular location is the cell wall. It carries out the reaction (1,4-alpha-D-galacturonosyl)n+m + H2O = (1,4-alpha-D-galacturonosyl)n + (1,4-alpha-D-galacturonosyl)m.. This is Probable polygalacturonase At1g80170 from Arabidopsis thaliana (Mouse-ear cress).